The primary structure comprises 226 residues: Ribose-5-phosphate isomerase A (226 aa).

Residues 33–36, 86–89, and 99–102 each bind substrate; these read TGST, DGAD, and KGGG. Glu-108 acts as the Proton acceptor in catalysis. Lys-126 serves as a coordination point for substrate.

The protein belongs to the ribose 5-phosphate isomerase family. As to quaternary structure, homodimer.

The enzyme catalyses aldehydo-D-ribose 5-phosphate = D-ribulose 5-phosphate. The protein operates within carbohydrate degradation; pentose phosphate pathway; D-ribose 5-phosphate from D-ribulose 5-phosphate (non-oxidative stage): step 1/1. Its function is as follows. Catalyzes the reversible conversion of ribose-5-phosphate to ribulose 5-phosphate. The polypeptide is Ribose-5-phosphate isomerase A (Bordetella pertussis (strain Tohama I / ATCC BAA-589 / NCTC 13251)).